A 336-amino-acid chain; its full sequence is Tryptophan--tRNA ligase (336 aa).

ATP contacts are provided by residues 16–18 and 24–25; these read QPT and GN. The short motif at 17–25 is the 'HIGH' region element; the sequence is PTGQLHLGN. Asp140 contacts L-tryptophan. ATP contacts are provided by residues 152–154, Val191, and 200–204; these read GED and KMSKS. Residues 200-204 carry the 'KMSKS' region motif; it reads KMSKS.

This sequence belongs to the class-I aminoacyl-tRNA synthetase family. In terms of assembly, homodimer.

It localises to the cytoplasm. It carries out the reaction tRNA(Trp) + L-tryptophan + ATP = L-tryptophyl-tRNA(Trp) + AMP + diphosphate + H(+). Catalyzes the attachment of tryptophan to tRNA(Trp). This chain is Tryptophan--tRNA ligase, found in Gloeobacter violaceus (strain ATCC 29082 / PCC 7421).